The chain runs to 130 residues: Small ribosomal subunit protein uS9 (130 aa).

Residues 109–130 (RKKERKKYGQRAARARYQYSKR) form a disordered region.

The protein belongs to the universal ribosomal protein uS9 family.

The sequence is that of Small ribosomal subunit protein uS9 from Nitratidesulfovibrio vulgaris (strain DSM 19637 / Miyazaki F) (Desulfovibrio vulgaris).